A 762-amino-acid polypeptide reads, in one-letter code: Probable inorganic carbon transporter subunit DabA (762 aa).

Zn(2+) is bound by residues Cys279, Asp281, His461, and Cys476.

It belongs to the inorganic carbon transporter (TC 9.A.2) DabA family. In terms of assembly, forms a complex with DabB. Requires Zn(2+) as cofactor.

The protein localises to the cell inner membrane. Part of an energy-coupled inorganic carbon pump. This is Probable inorganic carbon transporter subunit DabA from Legionella pneumophila subsp. pneumophila (strain Philadelphia 1 / ATCC 33152 / DSM 7513).